The following is a 479-amino-acid chain: Sulfate adenylyltransferase subunit 1 (479 aa).

One can recognise a tr-type G domain in the interval 25–239 (KSLLRFLTCG…EVLETVDIQR (215 aa)). The segment at 34-41 (GSVDDGKS) is G1. Position 34-41 (34-41 (GSVDDGKS)) interacts with GTP. Residues 92–96 (GITID) form a G2 region. Positions 113 to 116 (DTPG) are G3. Residues 113–117 (DTPGH) and 168–171 (NKMD) each bind GTP. The segment at 168–171 (NKMD) is G4. The segment at 206–208 (SAL) is G5.

Belongs to the TRAFAC class translation factor GTPase superfamily. Classic translation factor GTPase family. CysN/NodQ subfamily. Heterodimer composed of CysD, the smaller subunit, and CysN.

It catalyses the reaction sulfate + ATP + H(+) = adenosine 5'-phosphosulfate + diphosphate. Its pathway is sulfur metabolism; hydrogen sulfide biosynthesis; sulfite from sulfate: step 1/3. Functionally, with CysD forms the ATP sulfurylase (ATPS) that catalyzes the adenylation of sulfate producing adenosine 5'-phosphosulfate (APS) and diphosphate, the first enzymatic step in sulfur assimilation pathway. APS synthesis involves the formation of a high-energy phosphoric-sulfuric acid anhydride bond driven by GTP hydrolysis by CysN coupled to ATP hydrolysis by CysD. This Salmonella gallinarum (strain 287/91 / NCTC 13346) protein is Sulfate adenylyltransferase subunit 1.